A 437-amino-acid chain; its full sequence is Proline--tRNA ligase (437 aa).

Belongs to the class-II aminoacyl-tRNA synthetase family. ProS type 2 subfamily. In terms of assembly, homodimer.

It is found in the cytoplasm. It carries out the reaction tRNA(Pro) + L-proline + ATP = L-prolyl-tRNA(Pro) + AMP + diphosphate. Its function is as follows. Catalyzes the attachment of proline to tRNA(Pro) in a two-step reaction: proline is first activated by ATP to form Pro-AMP and then transferred to the acceptor end of tRNA(Pro). The chain is Proline--tRNA ligase from Rhizorhabdus wittichii (strain DSM 6014 / CCUG 31198 / JCM 15750 / NBRC 105917 / EY 4224 / RW1) (Sphingomonas wittichii).